The chain runs to 162 residues: Caveolin-2 (162 aa).

The Cytoplasmic segment spans residues 1-86 (MGLETEKADV…FEISKYVMYK (86 aa)). Position 19 is a phosphotyrosine; by SRC (tyrosine 19). Residues serine 20 and serine 23 each carry the phosphoserine modification. Tyrosine 27 carries the phosphotyrosine; by SRC modification. Serine 36 is modified (phosphoserine). The segment at residues 87-107 (FLTVFLAIPLAFIAGILFATL) is an intramembrane region (helical). Topologically, residues 108-162 (SCLHIWILMPFVKTCLMVLPSVQTIWKSVTDVFIAPLCTSIGRSFSSVSLQLSQD) are cytoplasmic.

Belongs to the caveolin family. As to quaternary structure, monomer or homodimer. Interacts with CAV1; the interaction forms a stable heterooligomeric complex that is required for targeting to lipid rafts and for caveolae formation. Tyrosine phosphorylated forms do not form heterooligomers with the Tyr-19-phosphorylated form existing as a monomer or dimer, and the Tyr-27-form as a monomer only. Interacts (tyrosine phosphorylated form) with the SH2 domain-containing proteins, RASA1, NCK1 and SRC. Interacts (tyrosine phosphorylated form) with INSR, the interaction (Tyr-27-phosphorylated form) is increased on insulin stimulation. Interacts (Tyr-19 phosphorylated form) with MAPK1 (phosphorylated form); the interaction, promoted by insulin, leads to nuclear location and MAPK1 activation. Interacts with STAT3; the interaction is increased on insulin-induced tyrosine phosphorylation leading to STAT activation. Phosphorylated on serine and tyrosine residues. CAV1 promotes phosphorylation on Ser-23 which then targets the complex to the plasma membrane, lipid rafts and caveolae. Phosphorylation on Ser-36 appears to modulate mitosis in endothelial cells. Phosphorylation on both Tyr-19 and Tyr-27 is required for insulin-induced 'Ser-727' phosphorylation of STAT3 and its activation. Phosphorylation on Tyr-19 is required for insulin-induced phosphorylation of MAPK1 and DNA binding of STAT3. Tyrosine phosphorylation is induced by both EGF and insulin (By. similarity).

It is found in the nucleus. It localises to the cytoplasm. The protein localises to the golgi apparatus membrane. Its subcellular location is the cell membrane. The protein resides in the membrane. It is found in the caveola. Functionally, may act as a scaffolding protein within caveolar membranes. Interacts directly with G-protein alpha subunits and can functionally regulate their activity. Acts as an accessory protein in conjunction with CAV1 in targeting to lipid rafts and driving caveolae formation. The Ser-36 phosphorylated form has a role in modulating mitosis in endothelial cells. Positive regulator of cellular mitogenesis of the MAPK signaling pathway. Required for the insulin-stimulated nuclear translocation and activation of MAPK1 and STAT3, and the subsequent regulation of cell cycle progression. The sequence is that of Caveolin-2 (CAV2) from Papio anubis (Olive baboon).